The following is a 1551-amino-acid chain: UDP-glucose:glycoprotein glucosyltransferase 1 (1551 aa).

The N-terminal stretch at 1 to 42 (MCSRGDANAAGAAAARRVTGLCYNMGLLIALALLCLFSLAEA) is a signal peptide. Asn269, Asn536, Asn1015, and Asn1228 each carry an N-linked (GlcNAc...) asparagine glycan. Residues 1244 to 1551 (KTEEVKQDKD…QEGSQKHEEL (308 aa)) form a glucosyltransferase region. Ser1277 carries the phosphoserine modification. Residues 1531-1551 (KELGTLHEEETQEGSQKHEEL) form a disordered region. The Prevents secretion from ER signature appears at 1548-1551 (HEEL).

Belongs to the glycosyltransferase 8 family. In terms of assembly, monomer as well as in a tight complex with SELENOF. Interacts with METTL23. Part of a large chaperone multiprotein complex comprising DNAJB11, HSP90B1, HSPA5, HYOU, PDIA2, PDIA4, PDIA6, PPIB, SDF2L1, UGGT1 and very small amounts of ERP29, but not, or at very low levels, CALR nor CANX. It depends on Ca(2+) as a cofactor.

It localises to the endoplasmic reticulum lumen. It is found in the endoplasmic reticulum-Golgi intermediate compartment. The enzyme catalyses N(4)-(alpha-D-Man-(1-&gt;2)-alpha-D-Man-(1-&gt;2)-alpha-D-Man-(1-&gt;3)-[alpha-D-Man-(1-&gt;2)-alpha-D-Man-(1-&gt;3)-[alpha-D-Man-(1-&gt;2)-alpha-D-Man-(1-&gt;6)]-alpha-D-Man-(1-&gt;6)]-beta-D-Man-(1-&gt;4)-beta-D-GlcNAc-(1-&gt;4)-beta-D-GlcNAc)-L-asparaginyl-[protein] (N-glucan mannose isomer 9A1,2,3B1,2,3) + UDP-alpha-D-glucose = N(4)-(alpha-D-Glc-(1-&gt;3)-alpha-D-Man-(1-&gt;2)-alpha-D-Man-(1-&gt;2)-alpha-D-Man-(1-&gt;3)-[alpha-D-Man-(1-&gt;2)-alpha-D-Man-(1-&gt;3)-[alpha-D-Man-(1-&gt;2)-alpha-D-Man-(1-&gt;6)]-alpha-D-Man-(1-&gt;6)]-beta-D-Man-(1-&gt;4)-beta-D-GlcNAc-(1-&gt;4)-beta-D-GlcNAc)-L-asparaginyl-[protein] + UDP + H(+). It participates in protein modification; protein glycosylation. Recognizes glycoproteins with minor folding defects. Reglucosylates single N-glycans near the misfolded part of the protein, thus providing quality control for protein folding in the endoplasmic reticulum. Reglucosylated proteins are recognized by calreticulin for recycling to the endoplasmic reticulum and refolding or degradation. This chain is UDP-glucose:glycoprotein glucosyltransferase 1 (Uggt1), found in Rattus norvegicus (Rat).